We begin with the raw amino-acid sequence, 330 residues long: 1,8-cineole synthase (330 aa).

Position 81 (D81) interacts with Mg(2+). A DDXXD motif motif is present at residues 81 to 85; sequence DDHFD. R174 contributes to the substrate binding site. Positions 220 and 224 each coordinate Mg(2+). The NXXXSXXXE motif signature appears at 220-228; sequence NDVLSLEKE. Residue K227 participates in substrate binding. E228 serves as a coordination point for Mg(2+). Substrate is bound at residue 314–315; sequence RY.

This sequence belongs to the terpene synthase family. As to quaternary structure, homodimer. Requires Mg(2+) as cofactor.

It catalyses the reaction (2E)-geranyl diphosphate + H2O = 1,8-cineole + diphosphate. The enzyme catalyses neryl diphosphate + H2O = 1,8-cineole + diphosphate. In terms of biological role, in vitro, catalyzes the formation of 1,8-cineole from geranyl diphosphate (GPP). Can also accept neryl diphosphate (NPP) as substrate to produce 1,8-cineole. The polypeptide is 1,8-cineole synthase (Streptomyces clavuligerus).